A 327-amino-acid polypeptide reads, in one-letter code: Ornithine carbamoyltransferase, mitochondrial (327 aa).

Carbamoyl phosphate contacts are provided by residues 63 to 66 (STRT), Arg-114, His-141, and Gln-144. L-ornithine contacts are provided by Asn-172, Asp-236, Ser-240, and Met-241. The Proton acceptor role is filled by Cys-276. Carbamoyl phosphate-binding positions include 276 to 277 (CL) and Arg-303.

This sequence belongs to the aspartate/ornithine carbamoyltransferase superfamily. OTCase family. In terms of assembly, interacts with trx2.

It is found in the mitochondrion matrix. The catalysed reaction is carbamoyl phosphate + L-ornithine = L-citrulline + phosphate + H(+). The protein operates within amino-acid biosynthesis; L-arginine biosynthesis; L-arginine from L-ornithine and carbamoyl phosphate: step 1/3. Its function is as follows. Ornithine carbamoyltransferase involved in the synthesis of arginine from glutamate via ornithine and the urea cycle. This Schizosaccharomyces pombe (strain 972 / ATCC 24843) (Fission yeast) protein is Ornithine carbamoyltransferase, mitochondrial (arg3).